Reading from the N-terminus, the 787-residue chain is Integrin beta-3 (787 aa).

Positions Met-1–Gly-25 are cleaved as a signal peptide. The Extracellular segment spans residues Glu-26–Asp-717. The region spanning Ile-29 to Ala-75 is the PSI domain. Cystine bridges form between Cys-30–Cys-48, Cys-38–Cys-460, Cys-41–Cys-63, Cys-51–Cys-74, Cys-202–Cys-209, Cys-257–Cys-298, Cys-399–Cys-411, Cys-431–Cys-458, Cys-462–Cys-482, Cys-473–Cys-485, Cys-487–Cys-496, Cys-498–Cys-528, Cys-511–Cys-526, Cys-520–Cys-531, Cys-533–Cys-546, Cys-548–Cys-569, Cys-553–Cys-567, Cys-561–Cys-572, and Cys-574–Cys-583. The region spanning Asp-134–Ile-376 is the VWFA domain. Mg(2+)-binding residues include Ser-146 and Ser-148. Ca(2+)-binding residues include Ser-148, Asp-151, Asp-152, and Asp-183. Residues Cys-202–Cys-209 form a CX3CL1-binding region. Residues Cys-202 to Cys-209 form an involved in CX3CL1-, NRG1-, FGF1- and IGF1-binding region. Ca(2+) is bound by residues Asn-240, Asp-242, Pro-244, Glu-245, and Asp-276. Position 245 (Glu-245) interacts with Mg(2+). A CX3CL1-binding region spans residues Leu-292 to Met-312. Asn-345 and Asn-396 each carry an N-linked (GlcNAc...) asparagine glycan. 4 consecutive I-EGF domains span residues Cys-462–Glu-497, Cys-498–Glu-547, Cys-548–Asn-584, and Cys-585–Glu-624. Asn-477 is a glycosylation site (N-linked (GlcNAc...) asparagine). An N-linked (GlcNAc...) asparagine glycan is attached at Asn-584. Cystine bridges form between Cys-585/Cys-608, Cys-592/Cys-606, Cys-600/Cys-611, Cys-613/Cys-623, Cys-626/Cys-629, Cys-633/Cys-680, Cys-639/Cys-660, Cys-642/Cys-656, and Cys-688/Cys-712. Asn-679 carries an N-linked (GlcNAc...) asparagine glycan. The helical transmembrane segment at Ile-718–Trp-740 threads the bilayer. Residues Lys-741–Thr-787 lie on the Cytoplasmic side of the membrane. At Thr-766 the chain carries Phosphothreonine. Tyr-772 is modified (phosphotyrosine). An LIR motif is present at residues Thr-776–Ile-782. Thr-778 is modified (phosphothreonine). Tyr-784 is subject to Phosphotyrosine.

Belongs to the integrin beta chain family. As to quaternary structure, heterodimer of an alpha and a beta subunit. Beta-3 (ITGB3) associates with either alpha-IIB (ITGA2B) or alpha-V (ITGAV). Interacts with FLNB and COMP. Interacts with PDIA6 following platelet stimulation. Interacts with SYK; upon activation by ITGB3 promotes platelet adhesion. Interacts with MYO10. Interacts with DAB2. Interacts with FERMT2. Integrin ITGAV:ITGB3 interacts with FBLN5 (via N-terminus). Interacts with EMP2; regulates the levels of the heterodimer ITGA5:ITGB3 integrin expression on the plasma membrane. ITGAV:ITGB3 interacts with CCN3. ITGAV:ITGB3 and ITGA2B:ITGB3 interact with SELP (via C-type lectin domain); the interaction mediates cell-cell interaction and adhesion. ITGAV:ITGB3 interacts with AGRA2. ITGAV:ITGB3 is found in a ternary complex with CX3CR1 and CX3CL1. ITGAV:ITGB3 is found in a ternary complex with NRG1 and ERBB3. ITGAV:ITGB3 is found in a ternary complex with FGF1 and FGFR1. ITGAV:ITGB3 interacts with FGF2; it is likely that FGF2 can simultaneously bind ITGAV:ITGB3 and FGF receptors. ITGAV:ITGB3 binds to IL1B. ITGAV:ITGB3 is found in a ternary complex with IGF1 and IGF1R. ITGAV:ITGB3 interacts with IGF2. ITGAV:ITGB3 interacts with FBN1. ITGAV:ITGB3 interacts with CD9, CD81 and CD151 (via second extracellular domain). Interacts (via the allosteric site (site 2)) with CXCL12 in a CXCR4-independent manner. Interacts with MXRA8/DICAM; the interaction inhibits ITGAV:ITGB3 heterodimer formation. ITGAV:ITGB3 interacts with PTN. Forms a complex with PTPRZ1 and PTN that stimulates endothelial cell migration through ITGB3 Tyr-772 phosphorylation. ITGAV:ITGB3 interacts with SLC6A4. Interacts with SLC6A4 (via C-terminus); this interaction regulates SLC6A4 trafficking. ITGA2B:ITGB3 interacts with PPIA/CYPA; the interaction is ROS and PPIase activity-dependent and is increased in the presence of thrombin. Interacts with tensin TNS3; TNS3 also interacts with PEAK1, thus acting as an adapter molecule to bridge the association of PEAK1 with ITGB3. Interacts with TM4SF19. Post-translationally, phosphorylated on tyrosine residues in response to thrombin-induced platelet aggregation. Probably involved in outside-in signaling.

The protein resides in the cell membrane. It localises to the cell projection. The protein localises to the lamellipodium membrane. Its subcellular location is the cell junction. It is found in the focal adhesion. The protein resides in the postsynaptic cell membrane. It localises to the synapse. Integrin alpha-V/beta-3 (ITGAV:ITGB3) is a receptor for cytotactin, fibronectin, laminin, matrix metalloproteinase-2, osteopontin, osteomodulin, prothrombin, thrombospondin, vitronectin and von Willebrand factor. Integrin alpha-IIB/beta-3 (ITGA2B:ITGB3) is a receptor for fibronectin, fibrinogen, plasminogen, prothrombin, thrombospondin and vitronectin. Integrins alpha-IIB/beta-3 and alpha-V/beta-3 recognize the sequence R-G-D in a wide array of ligands. Integrin alpha-IIB/beta-3 recognizes the sequence H-H-L-G-G-G-A-K-Q-A-G-D-V in fibrinogen gamma chain. Following activation integrin alpha-IIB/beta-3 brings about platelet/platelet interaction through binding of soluble fibrinogen. This step leads to rapid platelet aggregation which physically plugs ruptured endothelial surfaces. Fibrinogen binding enhances SELP expression in activated platelets. ITGAV:ITGB3 binds to fractalkine (CX3CL1) and acts as its coreceptor in CX3CR1-dependent fractalkine signaling. ITGAV:ITGB3 binds to NRG1 (via EGF domain) and this binding is essential for NRG1-ERBB signaling. ITGAV:ITGB3 binds to FGF1 and this binding is essential for FGF1 signaling. ITGAV:ITGB3 binds to FGF2 and this binding is essential for FGF2 signaling. ITGAV:ITGB3 binds to IGF1 and this binding is essential for IGF1 signaling. ITGAV:ITGB3 binds to IGF2 and this binding is essential for IGF2 signaling. ITGAV:ITGB3 binds to IL1B and this binding is essential for IL1B signaling. ITGAV:ITGB3 binds to PLA2G2A via a site (site 2) which is distinct from the classical ligand-binding site (site 1) and this induces integrin conformational changes and enhanced ligand binding to site 1. ITGAV:ITGB3 acts as a receptor for fibrillin-1 (FBN1) and mediates R-G-D-dependent cell adhesion to FBN1. ITGAV:ITGB3 binds to the Lilrb4a/Gp49b receptor and enhances the Lilrb4a-mediated inhibition of mast cell activation. ITGAV:ITGB3 also suppresses marginal zone B cell antibody production through its interaction with Lilrb4a. In brain, plays a role in synaptic transmission and plasticity. Involved in the regulation of the serotonin neurotransmission, is required to localize to specific compartments within the synapse the serotonin receptor SLC6A4 and for an appropriate reuptake of serotonin. Controls excitatory synaptic strength by regulating GRIA2-containing AMPAR endocytosis, which affects AMPAR abundance and composition. ITGAV:ITGB3 act as a receptor for CD40LG. ITGAV:ITGB3 acts as a receptor for IBSP and promotes cell adhesion and migration to IBSP. The chain is Integrin beta-3 from Mus musculus (Mouse).